A 137-amino-acid polypeptide reads, in one-letter code: Gonadotropin subunit beta-1 (137 aa).

The N-terminal stretch at 1-24 (MYCTHLMTLQLVVMAMLWVTPVRA) is a signal peptide. Intrachain disulfides connect Cys-32/Cys-78, Cys-46/Cys-93, Cys-55/Cys-108, Cys-59/Cys-110, and Cys-113/Cys-120. An N-linked (GlcNAc...) asparagine glycan is attached at Asn-36.

The protein belongs to the glycoprotein hormones subunit beta family. Heterodimer of an alpha and a beta chain.

It localises to the secreted. Involved in gametogenesis and steroidogenesis. This Oncorhynchus keta (Chum salmon) protein is Gonadotropin subunit beta-1 (cgba).